The chain runs to 164 residues: B-phycoerythrin alpha chain (164 aa).

Residues Cys-82 and Cys-139 each coordinate (2R,3E)-phycoerythrobilin.

The protein belongs to the phycobiliprotein family. As to quaternary structure, heteromer of 6 alpha, 6 beta and one gamma chain. Post-translationally, contains two covalently linked bilin chromophores.

Its subcellular location is the plastid. It localises to the chloroplast thylakoid membrane. In terms of biological role, light-harvesting photosynthetic bile pigment-protein from the phycobiliprotein complex. This Rhodella violacea (Red alga) protein is B-phycoerythrin alpha chain (cpeA).